The following is a 329-amino-acid chain: Chlorophyllase-1, chloroplastic (329 aa).

A chloroplast-targeting transit peptide spans 1–21 (MAAMVDAKPAASVQGTPLLAT). The GXSXG motif lies at 145–149 (GHSRG). The active-site Nucleophile is S147. Catalysis depends on charge relay system residues D169 and H242.

This sequence belongs to the AB hydrolase superfamily. Lipase family.

Its subcellular location is the plastid. The protein localises to the chloroplast. It carries out the reaction a chlorophyll + H2O = a chlorophyllide + phytol + H(+). Its pathway is porphyrin-containing compound metabolism; chlorophyll degradation. Its function is as follows. Catalyzes the hydrolysis of ester bond in chlorophyll to yield chlorophyllide and phytol. In Citrus sinensis (Sweet orange), this protein is Chlorophyllase-1, chloroplastic (CHLASE1).